We begin with the raw amino-acid sequence, 463 residues long: Cysteine--tRNA ligase (463 aa).

Cysteine 29 serves as a coordination point for Zn(2+). The 'HIGH' region signature appears at 31-41 (PTVYDFAHIGN). The Zn(2+) site is built by cysteine 227, histidine 252, and glutamate 256. Residues 285 to 289 (KMSKS) carry the 'KMSKS' region motif. Residue lysine 288 participates in ATP binding.

It belongs to the class-I aminoacyl-tRNA synthetase family. Monomer. It depends on Zn(2+) as a cofactor.

The protein resides in the cytoplasm. The enzyme catalyses tRNA(Cys) + L-cysteine + ATP = L-cysteinyl-tRNA(Cys) + AMP + diphosphate. The polypeptide is Cysteine--tRNA ligase (Rhodopseudomonas palustris (strain BisA53)).